A 94-amino-acid polypeptide reads, in one-letter code: Small ribosomal subunit protein uS19 (94 aa).

It belongs to the universal ribosomal protein uS19 family.

In terms of biological role, protein S19 forms a complex with S13 that binds strongly to the 16S ribosomal RNA. This Syntrophomonas wolfei subsp. wolfei (strain DSM 2245B / Goettingen) protein is Small ribosomal subunit protein uS19.